The sequence spans 165 residues: Protein SprT (165 aa).

The SprT-like domain maps to 20-162 (EKLAQANLKL…YRCVHCGEQL (143 aa)). His-78 serves as a coordination point for Zn(2+). Glu-79 is an active-site residue. His-82 contributes to the Zn(2+) binding site.

Belongs to the SprT family. It depends on Zn(2+) as a cofactor.

The protein localises to the cytoplasm. This chain is Protein SprT, found in Escherichia coli (strain SMS-3-5 / SECEC).